The following is a 989-amino-acid chain: Cellulose synthase A catalytic subunit 4 [UDP-forming] (989 aa).

Residues 1–184 (MMESGVPPCA…SRIIPISKNK (184 aa)) lie on the Cytoplasmic side of the membrane. Zn(2+) contacts are provided by Cys-9, Cys-12, Cys-20, Cys-23, Cys-28, Cys-31, Cys-43, and Cys-46. The RING-type; degenerate zinc finger occupies 9 to 47 (CAACGDDAHAACRACSYALCKACLDEDAAEGRTTCARCG). Positions 138-149 (KKEKKASAKKAA) are enriched in basic residues. Positions 138-158 (KKEKKASAKKAAAKAQAPPVE) are disordered. Residues 185–205 (LTPYRAVIIMRLVVLGLFFHY) traverse the membrane as a helical segment. Topologically, residues 206 to 213 (RITNPVYS) are extracellular. Residues 214 to 234 (AFGLWMTSVICEIWFGFSWIL) traverse the membrane as a helical segment. Over 235–772 (DQFPKWCPIN…INTIVYPFTS (538 aa)) the chain is Cytoplasmic. UDP-alpha-D-glucose is bound by residues Ser-272, Lys-278, Glu-279, and Asp-308. The active site involves Asp-308. The stretch at 362–389 (VKERRAMKRDYEEYKVRINALVAKAQKT) forms a coiled coil. Lys-449 provides a ligand contact to UDP-alpha-D-glucose. Positions 450 and 474 each coordinate Mn(2+). Residue Asp-688 is part of the active site. The helical transmembrane segment at 773-793 (LPLIAYCCLPAICLLTGKFII) threads the bilayer. The Extracellular segment spans residues 794–798 (PTLSN). A helical membrane pass occupies residues 799 to 819 (AATIWFLGLFISIIVTSVLEL). The Cytoplasmic portion of the chain corresponds to 820–835 (RWSGIGIEDWWRNEQF). Residues 836–856 (WVIGGVSAHLFAVFQGILKMI) form a helical membrane-spanning segment. Over 857 to 884 (AGLDTNFTVTAKATDDTEFGELYVFKWT) the chain is Extracellular. Asn-862 carries an N-linked (GlcNAc...) asparagine glycan. The chain crosses the membrane as a helical span at residues 885-905 (TVLIPPTSILVLNLVGVVAGF). The Cytoplasmic portion of the chain corresponds to 906-916 (SDALNSGYESW). Residues 917–937 (GPLFGKVFFAMWVIMHLYPFL) form a helical membrane-spanning segment. Topologically, residues 938–946 (KGLMGRQNR) are extracellular. The helical transmembrane segment at 947-967 (TPTIVVLWSVLLASVFSLLWV) threads the bilayer. Residues 968–989 (KIDPFIGSSETTTTNSCANFDC) lie on the Cytoplasmic side of the membrane.

The protein belongs to the glycosyltransferase 2 family. Plant cellulose synthase subfamily. Mn(2+) is required as a cofactor. The cofactor is Zn(2+).

It localises to the cell membrane. It carries out the reaction [(1-&gt;4)-beta-D-glucosyl](n) + UDP-alpha-D-glucose = [(1-&gt;4)-beta-D-glucosyl](n+1) + UDP + H(+). The protein operates within glycan metabolism; plant cellulose biosynthesis. Catalytic subunit of cellulose synthase terminal complexes ('rosettes'), required for beta-1,4-glucan microfibril crystallization, a major mechanism of the cell wall formation. Involved in the secondary cell wall formation. This Oryza sativa subsp. japonica (Rice) protein is Cellulose synthase A catalytic subunit 4 [UDP-forming] (CESA4).